We begin with the raw amino-acid sequence, 409 residues long: Methylthioribose-1-phosphate isomerase (409 aa).

The active-site Proton donor is aspartate 277.

Belongs to the eIF-2B alpha/beta/delta subunits family. MtnA subfamily.

The protein localises to the cytoplasm. The protein resides in the nucleus. It catalyses the reaction 5-(methylsulfanyl)-alpha-D-ribose 1-phosphate = 5-(methylsulfanyl)-D-ribulose 1-phosphate. It functions in the pathway amino-acid biosynthesis; L-methionine biosynthesis via salvage pathway; L-methionine from S-methyl-5-thio-alpha-D-ribose 1-phosphate: step 1/6. Functionally, catalyzes the interconversion of methylthioribose-1-phosphate (MTR-1-P) into methylthioribulose-1-phosphate (MTRu-1-P). This is Methylthioribose-1-phosphate isomerase from Scheffersomyces stipitis (strain ATCC 58785 / CBS 6054 / NBRC 10063 / NRRL Y-11545) (Yeast).